Reading from the N-terminus, the 229-residue chain is uncharacterized protein (229 aa).

Positions 66 to 94 (GHEKLQIQSALRDIESAENQARVQQCNAK) form a coiled coil.

This is an uncharacterized protein from Ostreid herpesvirus 1 (isolate France) (OsHV-1).